The chain runs to 305 residues: 4-diphosphocytidyl-2-C-methyl-D-erythritol kinase (305 aa).

Residue lysine 18 is part of the active site. Position 103–113 (103–113 (PYGAGLGGGSS)) interacts with ATP. Aspartate 145 is an active-site residue.

The protein belongs to the GHMP kinase family. IspE subfamily.

The catalysed reaction is 4-CDP-2-C-methyl-D-erythritol + ATP = 4-CDP-2-C-methyl-D-erythritol 2-phosphate + ADP + H(+). The protein operates within isoprenoid biosynthesis; isopentenyl diphosphate biosynthesis via DXP pathway; isopentenyl diphosphate from 1-deoxy-D-xylulose 5-phosphate: step 3/6. Its function is as follows. Catalyzes the phosphorylation of the position 2 hydroxy group of 4-diphosphocytidyl-2C-methyl-D-erythritol. This is 4-diphosphocytidyl-2-C-methyl-D-erythritol kinase from Lawsonia intracellularis (strain PHE/MN1-00).